A 309-amino-acid chain; its full sequence is UDP-N-acetylenolpyruvoylglucosamine reductase (309 aa).

The region spanning 34-221 (RVGGPAQVLF…TAAREAAQPI (188 aa)) is the FAD-binding PCMH-type domain. R179 is an active-site residue. Residue S228 is the Proton donor of the active site. E298 is a catalytic residue.

This sequence belongs to the MurB family. It depends on FAD as a cofactor.

It is found in the cytoplasm. It catalyses the reaction UDP-N-acetyl-alpha-D-muramate + NADP(+) = UDP-N-acetyl-3-O-(1-carboxyvinyl)-alpha-D-glucosamine + NADPH + H(+). Its pathway is cell wall biogenesis; peptidoglycan biosynthesis. In terms of biological role, cell wall formation. The protein is UDP-N-acetylenolpyruvoylglucosamine reductase of Methylorubrum extorquens (strain CM4 / NCIMB 13688) (Methylobacterium extorquens).